The following is a 134-amino-acid chain: MKKTPLLNIALSRLIASLGHGDIVVIGDAGLPVPPGVELIDLALTHGVPDFLTTLKVLLSEMQVERHVLAEEILLKQPTPLAALEGMTAGGELGQRQLMNHEDFKVLSRQARAVIRTGECQPYCNIALIAGVTF.

Histidine 20 acts as the Proton donor in catalysis. Residues aspartate 28, histidine 101, and 123–125 (YCN) contribute to the substrate site.

The protein belongs to the RbsD / FucU family. RbsD subfamily. Homodecamer.

Its subcellular location is the cytoplasm. It catalyses the reaction beta-D-ribopyranose = beta-D-ribofuranose. The protein operates within carbohydrate metabolism; D-ribose degradation; D-ribose 5-phosphate from beta-D-ribopyranose: step 1/2. Catalyzes the interconversion of beta-pyran and beta-furan forms of D-ribose. This is D-ribose pyranase from Pseudomonas fluorescens (strain ATCC BAA-477 / NRRL B-23932 / Pf-5).